The following is a 497-amino-acid chain: Vacuolar-processing enzyme beta-isozyme 1 (497 aa).

The N-terminal stretch at 1–23 is a signal peptide; it reads MAARCWVWGFVVALLAVAAAADG. N-linked (GlcNAc...) asparagine glycosylation occurs at Asn-153. His-180 is an active-site residue. Cys-222 functions as the Nucleophile in the catalytic mechanism. The cysteines at positions 255 and 269 are disulfide-linked. Asn-340 carries N-linked (GlcNAc...) asparagine glycosylation. Cystine bridges form between Cys-432/Cys-462 and Cys-444/Cys-479.

This sequence belongs to the peptidase C13 family. Auto-catalytic activation.

The protein localises to the protein storage vacuole. It carries out the reaction Hydrolysis of proteins and small molecule substrates at -Asn-|-Xaa- bonds.. Its function is as follows. Asparagine-specific endopeptidase that may be involved in processing of proteins targeted to vacuoles. Cysteine protease required for post-translational proteolysis of seed storage proteins in the protein storage vacuole (PSV) of developing seeds, by processing of proglutelin precursor to mature glutelin subunits, thus contributing to the formation of protein crystalline structures in PSV. This Oryza sativa subsp. indica (Rice) protein is Vacuolar-processing enzyme beta-isozyme 1.